The sequence spans 234 residues: Thymidylate kinase (234 aa).

Position 10–17 (10–17) interacts with ATP; sequence GGEGSGKT.

Belongs to the thymidylate kinase family.

It carries out the reaction dTMP + ATP = dTDP + ADP. Functionally, phosphorylation of dTMP to form dTDP in both de novo and salvage pathways of dTTP synthesis. This is Thymidylate kinase from Cyanothece sp. (strain PCC 7425 / ATCC 29141).